Here is a 211-residue protein sequence, read N- to C-terminus: Endo-1,4-beta-xylanase 4 (211 aa).

The first 16 residues, 1–16 (MKVTAAFAGLLVTAFA), serve as a signal peptide directing secretion. The GH11 domain occupies 19–210 (VPEPVLVSRS…GACSASVTIS (192 aa)). Asparagine 101 carries an N-linked (GlcNAc...) asparagine glycan. Glutamate 106 acts as the Nucleophile in catalysis. Glutamate 197 (proton donor) is an active-site residue.

It belongs to the glycosyl hydrolase 11 (cellulase G) family.

The protein resides in the secreted. The enzyme catalyses Endohydrolysis of (1-&gt;4)-beta-D-xylosidic linkages in xylans.. It functions in the pathway glycan degradation; xylan degradation. Its function is as follows. Endo-1,4-beta-xylanase involved in the hydrolysis of xylan, a major structural heterogeneous polysaccharide found in plant biomass representing the second most abundant polysaccharide in the biosphere, after cellulose. The sequence is that of Endo-1,4-beta-xylanase 4 (XYN4) from Aspergillus niger.